Consider the following 77-residue polypeptide: uncharacterized protein (77 aa).

The HTH cro/C1-type domain maps to 13 to 67 (VLQYMVNNDYSLNQLALEIGVSPATLSRVLNGERRPGQLVIGKMLHYFNLKFEDL). The H-T-H motif DNA-binding region spans 24-43 (LNQLALEIGVSPATLSRVLN).

The protein resides in the cytoplasm. This is an uncharacterized protein from Bacillus subtilis (strain 168).